The chain runs to 618 residues: DNA mismatch repair protein MutL (618 aa).

Residues 367–381 (EPTAAREPATPRYSG) show a composition bias toward low complexity. The tract at residues 367 to 402 (EPTAAREPATPRYSGGASGGNGGRQSAGGWPHAQPG) is disordered. The segment covering 382-392 (GASGGNGGRQS) has biased composition (gly residues).

The protein belongs to the DNA mismatch repair MutL/HexB family.

Its function is as follows. This protein is involved in the repair of mismatches in DNA. It is required for dam-dependent methyl-directed DNA mismatch repair. May act as a 'molecular matchmaker', a protein that promotes the formation of a stable complex between two or more DNA-binding proteins in an ATP-dependent manner without itself being part of a final effector complex. The chain is DNA mismatch repair protein MutL from Salmonella dublin (strain CT_02021853).